A 326-amino-acid polypeptide reads, in one-letter code: RNA-binding motif protein, X-linked 2 (326 aa).

A Glycyl lysine isopeptide (Lys-Gly) (interchain with G-Cter in SUMO2) cross-link involves residue Lys-8. Residues 36-114 (AWIFVGGLPY…RTIRVDHVSN (79 aa)) enclose the RRM domain. The disordered stretch occupies residues 117-326 (APQESEDVDD…SYHGSDRRHH (210 aa)). At Thr-140 the chain carries Phosphothreonine. The residue at position 149 (Ser-149) is a Phosphoserine. Residues 157-172 (TKKHKKDKKEKKKRKK) show a composition bias toward basic residues. The span at 177–190 (GQAQAEQPSCSRSA) shows a compositional bias: polar residues. Composition is skewed to basic and acidic residues over residues 191–200 (TVKEKKDERA), 207–219 (KTSE…EHRE), 236–245 (ARAEDPECKA), and 255–273 (KSAS…ERGR). Position 274 is a phosphoserine (Ser-274). Over residues 291–312 (HRSRSRSRSPDKSHRHKKYRHS) the composition is skewed to basic residues. Residues 313 to 326 (RERDSYHGSDRRHH) show a composition bias toward basic and acidic residues.

It belongs to the IST3 family. In terms of assembly, part of the activated spliceosome B/catalytic step 1 spliceosome, one of the forms of the spliceosome which has a well-formed active site but still cannot catalyze the branching reaction and is composed of at least 52 proteins, the U2, U5 and U6 snRNAs and the pre-mRNA. Component of the minor spliceosome, which splices U12-type introns.

It is found in the nucleus. Functionally, involved in pre-mRNA splicing as component of the activated spliceosome. As a component of the minor spliceosome, involved in the splicing of U12-type introns in pre-mRNAs. In Mus musculus (Mouse), this protein is RNA-binding motif protein, X-linked 2 (Rbmx2).